Here is a 155-residue protein sequence, read N- to C-terminus: Ribosome maturation factor RimP (155 aa).

This sequence belongs to the RimP family.

It localises to the cytoplasm. Its function is as follows. Required for maturation of 30S ribosomal subunits. This chain is Ribosome maturation factor RimP, found in Prochlorococcus marinus (strain MIT 9301).